Here is a 380-residue protein sequence, read N- to C-terminus: Adaptive-response sensory kinase SasA (380 aa).

The segment at 20 to 101 (LLFVANRPGD…QKVDYWWPRW (82 aa)) is kaiB-like domain, interacts with KaiC. The Histidine kinase domain occupies 157–380 (LLAHELRNPL…CFHFTLPVYS (224 aa)). A Phosphohistidine; by autocatalysis modification is found at histidine 160.

In terms of assembly, homotrimer with a small amount of possible homohexamer; a protein fragment of 109-380 is also a homotrimer. Interacts with KaiC, probably as 1 SasA trimer:1 KaiC homohexamer; unphosphorylated SasA has the highest affinity. Homodimer. Binds to the B-loop in the CI domain of KaiC; SasA and KaiB(fs) compete to bind to the CI domain. Binds preferentially to doubly phosphorylated KaiC. Autophosphorylates, probably on His-160.

It carries out the reaction ATP + protein L-histidine = ADP + protein N-phospho-L-histidine.. Functionally, member of the two-component regulatory system SasA/RpaA involved in genome-wide circadian gene expression. One of several clock output pathways. Participates in the Kai clock protein complex, the main circadian regulator in cyanobacteria, via its interaction with KaiC. KaiC enhances the autophosphorylation activity of SasA, which then transfers its phosphate group to RpaA to activate it. In addition to its output function, recruits fold-shifted KaiB (KaiB(fs)) to KaiC to cooperatively form the KaiB(6):KaiC(6) complex (independent of SasA kinase activity). Required for robustness of the circadian rhythm of gene expression and is involved in clock output, also required for adaptation to light/dark cycles. This is Adaptive-response sensory kinase SasA from Thermosynechococcus vestitus (strain NIES-2133 / IAM M-273 / BP-1).